A 318-amino-acid polypeptide reads, in one-letter code: Homoserine kinase (318 aa).

Position 97 to 107 (97 to 107) interacts with ATP; that stretch reads PIGSGLGSSAC.

Belongs to the GHMP kinase family. Homoserine kinase subfamily.

It is found in the cytoplasm. The enzyme catalyses L-homoserine + ATP = O-phospho-L-homoserine + ADP + H(+). Its pathway is amino-acid biosynthesis; L-threonine biosynthesis; L-threonine from L-aspartate: step 4/5. Catalyzes the ATP-dependent phosphorylation of L-homoserine to L-homoserine phosphate. The polypeptide is Homoserine kinase (Vibrio vulnificus (strain CMCP6)).